Here is a 236-residue protein sequence, read N- to C-terminus: Biosynthetic peptidoglycan transglycosylase (236 aa).

A helical transmembrane segment spans residues Ala12–Pro31.

It belongs to the glycosyltransferase 51 family.

It is found in the cell inner membrane. It catalyses the reaction [GlcNAc-(1-&gt;4)-Mur2Ac(oyl-L-Ala-gamma-D-Glu-L-Lys-D-Ala-D-Ala)](n)-di-trans,octa-cis-undecaprenyl diphosphate + beta-D-GlcNAc-(1-&gt;4)-Mur2Ac(oyl-L-Ala-gamma-D-Glu-L-Lys-D-Ala-D-Ala)-di-trans,octa-cis-undecaprenyl diphosphate = [GlcNAc-(1-&gt;4)-Mur2Ac(oyl-L-Ala-gamma-D-Glu-L-Lys-D-Ala-D-Ala)](n+1)-di-trans,octa-cis-undecaprenyl diphosphate + di-trans,octa-cis-undecaprenyl diphosphate + H(+). The protein operates within cell wall biogenesis; peptidoglycan biosynthesis. Functionally, peptidoglycan polymerase that catalyzes glycan chain elongation from lipid-linked precursors. The polypeptide is Biosynthetic peptidoglycan transglycosylase (Pseudomonas putida (strain ATCC 47054 / DSM 6125 / CFBP 8728 / NCIMB 11950 / KT2440)).